Here is a 328-residue protein sequence, read N- to C-terminus: Fructose-1,6-bisphosphatase class 1 (328 aa).

Glutamate 89, aspartate 110, leucine 112, and aspartate 113 together coordinate Mg(2+). Substrate is bound by residues asparagine 206, tyrosine 234, 252–254 (YLY), and lysine 264. Residue glutamate 270 coordinates Mg(2+).

Belongs to the FBPase class 1 family. As to quaternary structure, homotetramer. The cofactor is Mg(2+).

The protein resides in the cytoplasm. It catalyses the reaction beta-D-fructose 1,6-bisphosphate + H2O = beta-D-fructose 6-phosphate + phosphate. It functions in the pathway carbohydrate biosynthesis; gluconeogenesis. This is Fructose-1,6-bisphosphatase class 1 from Wigglesworthia glossinidia brevipalpis.